A 207-amino-acid polypeptide reads, in one-letter code: Uridine kinase (207 aa).

11–18 serves as a coordination point for ATP; that stretch reads GGSGSGKT.

This sequence belongs to the uridine kinase family.

It is found in the cytoplasm. The enzyme catalyses uridine + ATP = UMP + ADP + H(+). It carries out the reaction cytidine + ATP = CMP + ADP + H(+). It functions in the pathway pyrimidine metabolism; CTP biosynthesis via salvage pathway; CTP from cytidine: step 1/3. It participates in pyrimidine metabolism; UMP biosynthesis via salvage pathway; UMP from uridine: step 1/1. The polypeptide is Uridine kinase (Staphylococcus aureus (strain Mu3 / ATCC 700698)).